The chain runs to 51 residues: Lantibiotic streptococcin A-M49 (51 aa).

Positions 1–25 are excised as a propeptide; the sequence is MTKEHEIINSIQEVSLEELDQIIGA. Cross-links (beta-methyllanthionine (Thr-Cys)) lie at residues 33-38 and 42-50; these read TISHEC and TWAFLATCC. The segment at residues 35–49 is a cross-link (lanthionine (Ser-Cys)); the sequence is SHECHLNTWAFLATC. Position 48 is a 2,3-didehydrobutyrine (threonine 48).

This sequence belongs to the type A lantibiotic family. Post-translationally, maturation of lantibiotics involves the enzymatic conversion of Thr, and Ser into dehydrated AA and the formation of thioether bonds with cysteine. This is followed by membrane translocation and cleavage of the modified precursor.

It localises to the secreted. Its subcellular location is the cell surface. In terms of biological role, lanthionine-containing peptide antibiotic (lantibiotic) active on certain Gram-positive bacteria. The bactericidal activity of lantibiotics is based on depolarization of energized bacterial cytoplasmic membranes, initiated by the formation of aqueous transmembrane pores. The polypeptide is Lantibiotic streptococcin A-M49 (scnA') (Streptococcus pyogenes serotype M49).